Reading from the N-terminus, the 346-residue chain is MDNEIFDIAIIGAGPAGLFAQFYAGLRELKTALIEATPRIGGQITALYPEKTILDVAGFLGISGRDLVNELKLQTDLVDSKTFLNSEVTNLKKIASHFEIEINHHASFLAKSVIIASGNGSFSPRKIDVPGSSEAEQSGMLTYLLPGLSEVADKDFAVVGGGNTAVDYAVELIDHDCHVSLIHRRDNFRAMESSVTKLKNSRRTNFLTPMKITGLSPKKEKLEIELQSVPDGAVKRVSVDRLIGGFGFTASSRTINQWEEFPEQFNQGFLTNEAQMTSIAGIFAIGDASIYPGKSDLIATAFGEAPTAINQAVNYFDPDRGGPQHSTSLNKKEVFKHDRIKSRYNS.

7 residues coordinate FAD: Glu35, Gln43, Tyr48, Val88, Phe122, Asp287, and Thr327.

It belongs to the ferredoxin--NADP reductase type 2 family. Homodimer. FAD is required as a cofactor.

It catalyses the reaction 2 reduced [2Fe-2S]-[ferredoxin] + NADP(+) + H(+) = 2 oxidized [2Fe-2S]-[ferredoxin] + NADPH. In Oenococcus oeni (strain ATCC BAA-331 / PSU-1), this protein is Ferredoxin--NADP reductase.